A 688-amino-acid chain; its full sequence is Glycine--tRNA ligase beta subunit (688 aa).

It belongs to the class-II aminoacyl-tRNA synthetase family. As to quaternary structure, tetramer of two alpha and two beta subunits.

Its subcellular location is the cytoplasm. It carries out the reaction tRNA(Gly) + glycine + ATP = glycyl-tRNA(Gly) + AMP + diphosphate. This Listeria monocytogenes serotype 4b (strain CLIP80459) protein is Glycine--tRNA ligase beta subunit.